A 728-amino-acid polypeptide reads, in one-letter code: Golgin subfamily A member 5 (728 aa).

Residue Ser2 is modified to N-acetylserine. At 2 to 695 the chain is on the cytoplasmic side; the sequence is SWFADLAGRA…IFLRRYPIAR (694 aa). Dimethylated arginine occurs at positions 27 and 89. The interval 88–202 is disordered; it reads SRTGGDASHP…KKSTEESTVS (115 aa). Ser116 carries the post-translational modification Phosphoserine. Over residues 134 to 146 the composition is skewed to basic and acidic residues; the sequence is PTGRVEIKKEKGK. A compositionally biased stretch (low complexity) spans 152–167; that stretch reads SSQSSAVSSVTTSVTT. Residues 173-187 are compositionally biased toward polar residues; sequence ENSGSQSPEVSSSDS. A coiled-coil region spans residues 216–628; it reads GSMSHELSNL…LEQQLHSAAT (413 aa). A helical; Anchor for type IV membrane protein transmembrane segment spans residues 696 to 716; that stretch reads VFVIIYMALLHLWVMIVLLTY. Residues 717–728 are Lumenal-facing; it reads SPEMHHDQPYGK.

As to quaternary structure, homodimer. Interacts with RAB1A that has been activated by GTP-binding. Interacts with isoform CASP of CUX1. Highly phosphorylated during mitosis. Phosphorylation is barely detectable during interphase.

It is found in the golgi apparatus membrane. Involved in maintaining Golgi structure. Stimulates the formation of Golgi stacks and ribbons. Involved in intra-Golgi retrograde transport. This is Golgin subfamily A member 5 (Golga5) from Rattus norvegicus (Rat).